The chain runs to 525 residues: GMP synthase [glutamine-hydrolyzing] (525 aa).

Positions 9–207 (RILILDFGSQ…VQDICGCEAL (199 aa)) constitute a Glutamine amidotransferase type-1 domain. Cys-86 acts as the Nucleophile in catalysis. Residues His-181 and Glu-183 contribute to the active site. Residues 208 to 400 (WTASNIVEDA…LGLPYDMVYR (193 aa)) enclose the GMPS ATP-PPase domain. 235 to 241 (SGGVDSS) is a binding site for ATP.

In terms of assembly, homodimer.

The catalysed reaction is XMP + L-glutamine + ATP + H2O = GMP + L-glutamate + AMP + diphosphate + 2 H(+). Its pathway is purine metabolism; GMP biosynthesis; GMP from XMP (L-Gln route): step 1/1. In terms of biological role, catalyzes the synthesis of GMP from XMP. This is GMP synthase [glutamine-hydrolyzing] from Pseudomonas entomophila (strain L48).